Here is a 966-residue protein sequence, read N- to C-terminus: Aminopeptidase N (966 aa).

The Cytoplasmic segment spans residues 1-8; that stretch reads MAKGFYIS. Residues 9-32 form a helical; Signal-anchor for type II membrane protein membrane-spanning segment; sequence KSLGILGILLGVAALCTIVALSVV. The tract at residues 33-65 is cytosolic Ser/Thr-rich junction; sequence YRQEKNKNTSQSPSMAPLNPTATSSPATTLDQN. Over 33–966 the chain is Extracellular; that stretch reads YRQEKNKNTS…VLAWFTANSA (934 aa). N-linked (GlcNAc...) asparagine glycosylation is found at asparagine 40 and asparagine 125. The tract at residues 40–61 is disordered; sequence NTSQSPSMAPLNPTATSSPATT. The interval 66 to 966 is metalloprotease; sequence LPWNRYRLPK…VLAWFTANSA (901 aa). Tyrosine 173 carries the post-translational modification Sulfotyrosine. Residues asparagine 259 and asparagine 315 are each glycosylated (N-linked (GlcNAc...) asparagine). Position 348–352 (348–352) interacts with substrate; sequence GAMEN. Histidine 384 is a Zn(2+) binding site. Glutamate 385 serves as the catalytic Proton acceptor. Zn(2+) is bound by residues histidine 388 and glutamate 407. Sulfotyrosine occurs at positions 415 and 420. Residues asparagine 552, asparagine 570, asparagine 624, and asparagine 734 are each glycosylated (N-linked (GlcNAc...) asparagine). 2 disulfides stabilise this stretch: cysteine 760/cysteine 767 and cysteine 797/cysteine 833. The N-linked (GlcNAc...) asparagine glycan is linked to asparagine 817. Tyrosine 852 carries the phosphotyrosine modification. A Sulfotyrosine modification is found at tyrosine 912.

This sequence belongs to the peptidase M1 family. As to quaternary structure, homodimer. Interacts with SLC6A19. It depends on Zn(2+) as a cofactor. In terms of processing, sulfated. Post-translationally, N- and O-glycosylated. May undergo proteolysis and give rise to a soluble form.

Its subcellular location is the cell membrane. It carries out the reaction Release of an N-terminal amino acid, Xaa-|-Yaa- from a peptide, amide or arylamide. Xaa is preferably Ala, but may be most amino acids including Pro (slow action). When a terminal hydrophobic residue is followed by a prolyl residue, the two may be released as an intact Xaa-Pro dipeptide.. Functionally, broad specificity aminopeptidase which plays a role in the final digestion of peptides generated from hydrolysis of proteins by gastric and pancreatic proteases. Also involved in the processing of various peptides including peptide hormones, such as angiotensin III and IV, neuropeptides, and chemokines. May also be involved the cleavage of peptides bound to major histocompatibility complex class II molecules of antigen presenting cells. May have a role in angiogenesis and promote cholesterol crystallization. May have a role in amino acid transport by acting as binding partner of amino acid transporter SLC6A19 and regulating its activity. The polypeptide is Aminopeptidase N (ANPEP) (Oryctolagus cuniculus (Rabbit)).